Reading from the N-terminus, the 621-residue chain is Phosphomethylpyrimidine synthase (621 aa).

A compositionally biased stretch (low complexity) spans 1 to 23 (MTAPFLSSLSPTSPLASATAPFP). A disordered region spans residues 1 to 29 (MTAPFLSSLSPTSPLASATAPFPGSRKVY). Substrate is bound by residues N215, M244, Y273, H309, 329-331 (SRG), 370-373 (DGLR), and E409. H413 contributes to the Zn(2+) binding site. Y436 is a substrate binding site. Residue H477 coordinates Zn(2+). The [4Fe-4S] cluster site is built by C557, C560, and C565.

This sequence belongs to the ThiC family. In terms of assembly, homodimer. [4Fe-4S] cluster is required as a cofactor.

The enzyme catalyses 5-amino-1-(5-phospho-beta-D-ribosyl)imidazole + S-adenosyl-L-methionine = 4-amino-2-methyl-5-(phosphooxymethyl)pyrimidine + CO + 5'-deoxyadenosine + formate + L-methionine + 3 H(+). Its pathway is cofactor biosynthesis; thiamine diphosphate biosynthesis. In terms of biological role, catalyzes the synthesis of the hydroxymethylpyrimidine phosphate (HMP-P) moiety of thiamine from aminoimidazole ribotide (AIR) in a radical S-adenosyl-L-methionine (SAM)-dependent reaction. The sequence is that of Phosphomethylpyrimidine synthase from Rhodospirillum rubrum (strain ATCC 11170 / ATH 1.1.1 / DSM 467 / LMG 4362 / NCIMB 8255 / S1).